Reading from the N-terminus, the 761-residue chain is MESGGGSLGLHTSDARMAHTMIMQDFVAGMAGTAHIDGDHIVVSVPEAVLVSDVVTDDGITLDHGLAAEVVHGPDIITETDVVTEGVIVPEAVLEADVAIEEDLEEDDGDHILTSELITETVRVPEQVFVADLVSGPDGHLEHVVQDCVSGVDSPTMVSEEVLVTNSDTETVIQAGGGVPGSTVTIKTEEDDDDDVKSTSEDYLMISLDDVGEKLEHMGNTPLKIASDGSQEDVKEDAFGSEVIKVYIFKAEAEDDVEIGGTEIVTESEYSSGHSVAGVLDQSRMQREKMVYMAVKDSSQEQDDIRDERRVSRRYEECQAPGNTFDSALENRNTTAAQYLQICDSMNTNKVLKQKIKKRRRGETRQWQTAVIIGPDGQPLTVYPCHICTKKFKSRGFLKRHMKNHPDHLMRKKYQCTDCDFTTNKKVSFHNHLESHKLINKVDKTHEFTEYTRRYREASPLSSNKLILRDKEPKMHKCKYCDYETAEQGLLNRHLLAVHSKSFPHVCVECGKGFRHPSELKKHMRTHTGEKPYQCQYCAFRCADQSNLKTHIKSKHGSNLPYKCEHCPQAFGDERELQRHLDLFQGHKTHQCPHCDHKSTNSSDLKRHIISVHTKDFPHKCEVCDKGFHRPSELKKHSDIHKGRKIHQCRHCDFKTSDPFILSGHILSVHTKDQSLKCKRCKRGFRQQNELKKHMKTHTGRKIYQCEYCEYSTTDASGFKRHVISIHTKDYPHRCEFCKKGFRRPSEKKQHIMRHHKETLM.

Glycyl lysine isopeptide (Lys-Gly) (interchain with G-Cter in SUMO2) cross-links involve residues Lys-224, Lys-235, and Lys-296. C2H2-type zinc fingers lie at residues 383 to 408 (YPCHICTKKFKSRGFLKRHMKNHPDH), 414 to 436 (YQCTDCDFTTNKKVSFHNHLESH), 476 to 499 (HKCKYCDYETAEQGLLNRHLLAVH), 505 to 527 (HVCVECGKGFRHPSELKKHMRTH), and 533 to 556 (YQCQYCAFRCADQSNLKTHIKSKH). Residues 562-584 (YKCEHCPQAFGDERELQRHLDLF) form a C2H2-type 6; atypical zinc finger. 3 residues coordinate Zn(2+): Cys-564, Cys-567, and His-580. 6 C2H2-type zinc fingers span residues 590–613 (HQCPHCDHKSTNSSDLKRHIISVH), 619–641 (HKCEVCDKGFHRPSELKKHSDIH), 647–670 (HQCRHCDFKTSDPFILSGHILSVH), 676–698 (LKCKRCKRGFRQQNELKKHMKTH), 704–727 (YQCEYCEYSTTDASGFKRHVISIH), and 733–755 (HRCEFCKKGFRRPSEKKQHIMRH).

This sequence belongs to the krueppel C2H2-type zinc-finger protein family. Interacts with PHF8.

Its subcellular location is the nucleus. In terms of biological role, transcription regulator required for brain development. Probably acts as a transcription factor that binds to the promoter of target genes and recruits PHF8 histone demethylase, leading to activated expression of genes involved in neuron development, such as KDM5C. May compete with transcription factor ARX for activation of expression of KDM5C. The chain is Zinc finger protein 711 (Znf711) from Mus musculus (Mouse).